Here is a 404-residue protein sequence, read N- to C-terminus: Metacaspase-1A (404 aa).

Positions 1-10 are enriched in basic residues; sequence MNPHHSHHHS. Residues 1–100 form a disordered region; the sequence is MNPHHSHHHS…PSDPVSFGQG (100 aa). Residues 24–51 show a composition bias toward low complexity; sequence QQQPPSNPYQYNQPSPQPYQGSQPPQNG. Active-site residues include histidine 200 and cysteine 256.

It belongs to the peptidase C14B family.

Functionally, involved in cell death (apoptosis). The sequence is that of Metacaspase-1A (casA) from Aspergillus niger (strain ATCC MYA-4892 / CBS 513.88 / FGSC A1513).